Here is a 285-residue protein sequence, read N- to C-terminus: Urease accessory protein UreD (285 aa).

Belongs to the UreD family. As to quaternary structure, ureD, UreF and UreG form a complex that acts as a GTP-hydrolysis-dependent molecular chaperone, activating the urease apoprotein by helping to assemble the nickel containing metallocenter of UreC. The UreE protein probably delivers the nickel.

The protein localises to the cytoplasm. Its function is as follows. Required for maturation of urease via the functional incorporation of the urease nickel metallocenter. This chain is Urease accessory protein UreD, found in Azoarcus sp. (strain BH72).